Reading from the N-terminus, the 311-residue chain is MADPLQHKGAAKTSRIPIKIVPQERQRLPPWIRAKAPSLPNVGRLKGILREAKLHTVCEEASCPNLGECFGHGTATFMILGDLCTRRCPFCDVGHGTPLPPDADEPRHLAETIALMALKYVVITSVDRDDLRDGGAGHFAECIAAVREKSPATRIEILTPDFRGRLDKALAALDRAPPDVMNHNLETVPRLYKAARPGADYAHSLKLLQDFRTRHPDIPTKSGLMLGLGETDDEILEVMRDLRAHGVDMLTLGQYLQPSRHHLAVLRFVTPERFAQFEQEALAMGFRHAACGPMVRSSYHADQQAAAAAAG.

Residues cysteine 58, cysteine 63, cysteine 69, cysteine 84, cysteine 88, cysteine 91, and serine 298 each contribute to the [4Fe-4S] cluster site. The Radical SAM core domain maps to 70–287; sequence FGHGTATFMI…EQEALAMGFR (218 aa).

Belongs to the radical SAM superfamily. Lipoyl synthase family. [4Fe-4S] cluster is required as a cofactor.

It localises to the cytoplasm. It carries out the reaction [[Fe-S] cluster scaffold protein carrying a second [4Fe-4S](2+) cluster] + N(6)-octanoyl-L-lysyl-[protein] + 2 oxidized [2Fe-2S]-[ferredoxin] + 2 S-adenosyl-L-methionine + 4 H(+) = [[Fe-S] cluster scaffold protein] + N(6)-[(R)-dihydrolipoyl]-L-lysyl-[protein] + 4 Fe(3+) + 2 hydrogen sulfide + 2 5'-deoxyadenosine + 2 L-methionine + 2 reduced [2Fe-2S]-[ferredoxin]. The protein operates within protein modification; protein lipoylation via endogenous pathway; protein N(6)-(lipoyl)lysine from octanoyl-[acyl-carrier-protein]: step 2/2. In terms of biological role, catalyzes the radical-mediated insertion of two sulfur atoms into the C-6 and C-8 positions of the octanoyl moiety bound to the lipoyl domains of lipoate-dependent enzymes, thereby converting the octanoylated domains into lipoylated derivatives. The sequence is that of Lipoyl synthase from Thiobacillus denitrificans (strain ATCC 25259 / T1).